Here is a 185-residue protein sequence, read N- to C-terminus: Ribosome-recycling factor (185 aa).

Belongs to the RRF family.

The protein localises to the cytoplasm. Its function is as follows. Responsible for the release of ribosomes from messenger RNA at the termination of protein biosynthesis. May increase the efficiency of translation by recycling ribosomes from one round of translation to another. This is Ribosome-recycling factor from Listeria monocytogenes serovar 1/2a (strain ATCC BAA-679 / EGD-e).